The chain runs to 270 residues: uncharacterized protein (270 aa).

This is an uncharacterized protein from Bacillus subtilis (strain 168).